The following is a 440-amino-acid chain: Xylose isomerase (440 aa).

Catalysis depends on residues His100 and Asp103. Glu231, Glu267, His270, Asp295, Asp306, Asp308, and Asp338 together coordinate Mg(2+).

Belongs to the xylose isomerase family. Homotetramer. It depends on Mg(2+) as a cofactor.

It is found in the cytoplasm. It carries out the reaction alpha-D-xylose = alpha-D-xylulofuranose. This chain is Xylose isomerase, found in Paraburkholderia phytofirmans (strain DSM 17436 / LMG 22146 / PsJN) (Burkholderia phytofirmans).